The following is an 836-amino-acid chain: uncharacterized protein (836 aa).

Disordered stretches follow at residues 1–25, 692–718, and 789–836; these read MDST…NEEE, DSRS…NNQR, and ESSG…GYAS. Polar residues-rich tracts occupy residues 789 to 799 and 825 to 836; these read ESSGINVSNTR and IDSSSAQNGYAS.

It localises to the nucleus. This is an uncharacterized protein from Schizosaccharomyces pombe (strain 972 / ATCC 24843) (Fission yeast).